The sequence spans 194 residues: MKLLHLDSSALGATSISRELSAAIVAQQRRLYPEVEVTYRDLDRDPIPHLTAQTLAQTDPAEAAAAEAVMQQFLQAEVIVIGAPMYNFAIPSTLKAWIDRIAVAGRTFHYTANGPEGLAGGKRLIIASARGGVYAEPSNDFQEPYLRQLFGFLGIDDITLVRAEGVAYSPQHRADALAAALAGLCAEQDAAVMA.

FMN contacts are provided by residues Ser9, 15–17, and 85–88; these read SIS and MYNF.

The protein belongs to the azoreductase type 1 family. As to quaternary structure, homodimer. The cofactor is FMN.

It catalyses the reaction 2 a quinone + NADH + H(+) = 2 a 1,4-benzosemiquinone + NAD(+). The enzyme catalyses N,N-dimethyl-1,4-phenylenediamine + anthranilate + 2 NAD(+) = 2-(4-dimethylaminophenyl)diazenylbenzoate + 2 NADH + 2 H(+). In terms of biological role, quinone reductase that provides resistance to thiol-specific stress caused by electrophilic quinones. Also exhibits azoreductase activity. Catalyzes the reductive cleavage of the azo bond in aromatic azo compounds to the corresponding amines. This Xanthomonas oryzae pv. oryzae (strain MAFF 311018) protein is FMN-dependent NADH:quinone oxidoreductase.